A 414-amino-acid chain; its full sequence is Gamma-glutamyl phosphate reductase (414 aa).

It belongs to the gamma-glutamyl phosphate reductase family.

The protein resides in the cytoplasm. It catalyses the reaction L-glutamate 5-semialdehyde + phosphate + NADP(+) = L-glutamyl 5-phosphate + NADPH + H(+). The protein operates within amino-acid biosynthesis; L-proline biosynthesis; L-glutamate 5-semialdehyde from L-glutamate: step 2/2. Its function is as follows. Catalyzes the NADPH-dependent reduction of L-glutamate 5-phosphate into L-glutamate 5-semialdehyde and phosphate. The product spontaneously undergoes cyclization to form 1-pyrroline-5-carboxylate. This Kosmotoga olearia (strain ATCC BAA-1733 / DSM 21960 / TBF 19.5.1) protein is Gamma-glutamyl phosphate reductase.